A 243-amino-acid chain; its full sequence is Bidirectional sugar transporter SWEET2a (243 aa).

Residues 1 to 15 (MMNALGLSVAATSTG) form the signal peptide. Residues 16–24 (SPFHDVCCY) lie on the Extracellular side of the membrane. Residues 25–45 (GAGIAGNIFALVLFISPLPTF) traverse the membrane as a helical segment. Residues 27 to 112 (GIAGNIFALV…ATFIAFADAK (86 aa)) form the MtN3/slv 1 domain. Residues 46–56 (KRIVRNGSTEQ) are Cytoplasmic-facing. The chain crosses the membrane as a helical span at residues 57–79 (FSAMPYIYSLLNCLICLWYGLPF). The Extracellular segment spans residues 80–90 (VSYGVVLVATV). Residues 91–111 (NSIGALFQLAYTATFIAFADA) traverse the membrane as a helical segment. Over 112–118 (KNRVKVS) the chain is Cytoplasmic. The helical transmembrane segment at 119-139 (SLLVMVFGVFALIVYVSLALF) threads the bilayer. The Extracellular portion of the chain corresponds to 140 to 146 (DHQTRQL). A helical membrane pass occupies residues 147–167 (FVGYLSVASLIFMFASPLSII). The 83-residue stretch at 147 to 229 (FVGYLSVASL…QLVLYGYFRK (83 aa)) folds into the MtN3/slv 2 domain. The Cytoplasmic portion of the chain corresponds to 168-180 (NLVIRTKSVEYMP). A helical transmembrane segment spans residues 181 to 201 (FYLSLSMFLMSVSFFAYGVLL). Residues 202-203 (HD) lie on the Extracellular side of the membrane. The chain crosses the membrane as a helical span at residues 204 to 224 (FFIYIPNGIGTVLGVIQLVLY). At 225 to 243 (GYFRKGSREDSLPLLVTHT) the chain is on the cytoplasmic side.

This sequence belongs to the SWEET sugar transporter family. In terms of assembly, forms homooligomers and/or heterooligomers.

It localises to the cell membrane. Functionally, mediates both low-affinity uptake and efflux of sugar across the plasma membrane. The protein is Bidirectional sugar transporter SWEET2a (SWEET2A) of Oryza sativa subsp. indica (Rice).